Reading from the N-terminus, the 30-residue chain is Cycloviolacin-H4 (30 aa).

A cross-link (cyclopeptide (Gly-Asn)) is located at residues 1–30 (GIPCAESCVWIPCTVTALLGCSCSNNVCYN). Cystine bridges form between Cys4-Cys21, Cys8-Cys23, and Cys13-Cys28.

Post-translationally, this is a cyclic peptide.

Its function is as follows. Probably participates in a plant defense mechanism. Has potent hemolytic activity. This Viola hederacea (Australian violet) protein is Cycloviolacin-H4.